The chain runs to 363 residues: DNA replication and repair protein RecF (363 aa).

30–37 (GINGSGKS) lines the ATP pocket.

It belongs to the RecF family.

It is found in the cytoplasm. Functionally, the RecF protein is involved in DNA metabolism; it is required for DNA replication and normal SOS inducibility. RecF binds preferentially to single-stranded, linear DNA. It also seems to bind ATP. This chain is DNA replication and repair protein RecF, found in Pseudoalteromonas atlantica (strain T6c / ATCC BAA-1087).